The following is a 127-amino-acid chain: DNA-directed RNA polymerases I, II, and III subunit RPABC2 (127 aa).

Acidic residues predominate over residues 1–34; sequence MSDNEDNFDGDDFDDVEEDEGLDDLENAEEEGQE. The tract at residues 1–53 is disordered; it reads MSDNEDNFDGDDFDDVEEDEGLDDLENAEEEGQENVEILPSGERPQANQKRIT. Residue Ser-2 is modified to N-acetylserine. A Phosphoserine; by CK2 modification is found at Ser-2.

The protein belongs to the archaeal Rpo6/eukaryotic RPB6 RNA polymerase subunit family. As to quaternary structure, component of the RNA polymerase I (Pol I), RNA polymerase II (Pol II) and RNA polymerase III (Pol III) complexes consisting of at least 13, 12 and 17 subunits, respectively. Pol I complex consists of a ten-subunit catalytic core composed of POLR1A/RPA1, POLR1B/RPA2, POLR1C/RPAC1, POLR1D/RPAC2, POLR1H/RPA12, POLR2E/RPABC1, POLR2F/RPABC2, POLR2H/RPABC3, POLR2K/RPABC4 and POLR2L/RPABC5; a mobile stalk subunit POLR1F/RPA43 protruding from the core and additional subunits homologous to general transcription factors POLR1E/RPA49 and POLR1G/RPA34. Part of Pol I pre-initiation complex (PIC), in which Pol I core assembles with RRN3 and promoter-bound UTBF and SL1/TIF-IB complex. Pol II complex contains a ten-subunit catalytic core composed of POLR2A/RPB1, POLR2B/RPB2, POLR2C/RPB3, POLR2I/RPB9, POLR2J/RPB11, POLR2E/RPABC1, POLR2F/RPABC2, POLR2H/RPABC3, POLR2K/RPABC4 and POLR2L/RPABC5 and a mobile stalk composed of two subunits POLR2D/RPB4 and POLR2G/RPB7. Part of Pol II(G) complex, in which Pol II core associates with an additional subunit POLR2M; unlike conventional Pol II, Pol II(G) functions as a transcriptional repressor. Part of TBP-based Pol II pre-initiation complex (PIC), in which Pol II core assembles with general transcription factors and other specific initiation factors including GTF2E1, GTF2E2, GTF2F1, GTF2F2, TCEA1, ERCC2, ERCC3, GTF2H2, GTF2H3, GTF2H4, GTF2H5, GTF2A1, GTF2A2, GTF2B and TBP; this large multi-subunit PIC complex mediates DNA unwinding and targets Pol II core to the transcription start site where the first phosphodiester bond forms. Pol III complex consists of a ten-subunit catalytic core composed of POLR3A/RPC1, POLR3B/RPC2, POLR1C/RPAC1, POLR1D/RPAC2, POLR3K/RPC10, POLR2E/RPABC1, POLR2F/RPABC2, POLR2H/RPABC3, POLR2K/RPABC4 and POLR2L/RPABC5; a mobile stalk composed of two subunits POLR3H/RPC8 and CRCP/RPC9, protruding from the core and functioning primarily in transcription initiation; and additional subunits homologous to general transcription factors of the RNA polymerase II machinery, POLR3C/RPC3-POLR3F/RPC6-POLR3G/RPC7 heterotrimer required for transcription initiation and POLR3D/RPC4-POLR3E/RPC5 heterodimer involved in both transcription initiation and termination.

It localises to the nucleus. The protein resides in the nucleolus. Its function is as follows. DNA-dependent RNA polymerase catalyzes the transcription of DNA into RNA using the four ribonucleoside triphosphates as substrates. Common component of RNA polymerases I, II, and III which synthesize ribosomal RNA precursors, mRNA precursors and many functional non-coding RNAs, and small RNAs, such as 5S rRNA and tRNAs, respectively. Pol II is the central component of the basal RNA polymerase II transcription machinery. Pols are composed of mobile elements that move relative to each other. In Pol II, POLR2F/RPABC2 is part of the clamp element and together with parts of POLR2A/RPB1 and POLR2B/RPB2 forms a pocket to which the POLR2D/RPB4-POLR2G/RPB7 subcomplex binds. In Mus musculus (Mouse), this protein is DNA-directed RNA polymerases I, II, and III subunit RPABC2.